Consider the following 634-residue polypeptide: DNA-directed RNA polymerase subunit gamma (634 aa).

Residues cysteine 74, cysteine 76, cysteine 89, and cysteine 92 each contribute to the Zn(2+) site. Residues aspartate 471, aspartate 473, and aspartate 475 each contribute to the Mg(2+) site.

It belongs to the RNA polymerase beta' chain family. RpoC1 subfamily. In terms of assembly, in cyanobacteria the RNAP catalytic core is composed of 2 alpha, 1 beta, 1 beta', 1 gamma and 1 omega subunit. When a sigma factor is associated with the core the holoenzyme is formed, which can initiate transcription. Mg(2+) serves as cofactor. Zn(2+) is required as a cofactor.

It catalyses the reaction RNA(n) + a ribonucleoside 5'-triphosphate = RNA(n+1) + diphosphate. In terms of biological role, DNA-dependent RNA polymerase catalyzes the transcription of DNA into RNA using the four ribonucleoside triphosphates as substrates. The chain is DNA-directed RNA polymerase subunit gamma from Prochlorococcus marinus (strain MIT 9312).